The sequence spans 1148 residues: Phospholipid-transporting ATPase IB (1148 aa).

Over 1–44 (MSRATSVGDQLEAPARIIYLNQSHLNKFCDNRISTAKYSVLTFL) the chain is Cytoplasmic. A Phosphothreonine modification is found at Thr5. The chain crosses the membrane as a helical span at residues 45–66 (PRFLYEQIRRAANAFFLFIALL). At 67–71 (QQIPD) the chain is on the exoplasmic loop side. Residues 72–94 (VSPTGRYTTLVPLVIILTIAGIK) traverse the membrane as a helical segment. Topologically, residues 95–276 (EIIEDFKRHK…SNVEKVTNVQ (182 aa)) are cytoplasmic. The helical transmembrane segment at 277-298 (ILVLFGILLVMALVSSVGALFW) threads the bilayer. Residues 299 to 323 (NGSHGGKSWYIKKMDTNSDNFGYNL) are Exoplasmic loop-facing. A helical membrane pass occupies residues 324-345 (LTFIILYNNLIPISLLVTLEVV). The Cytoplasmic portion of the chain corresponds to 346–837 (KYTQALFINW…GAWSYNRVTK (492 aa)). The active-site 4-aspartylphosphate intermediate is the Asp388. 12 residues coordinate ATP: Asp388, Lys389, Thr390, Glu488, Phe529, Lys552, Arg585, Thr665, Gly666, Asp667, Arg755, and Lys761. Asp388 is a Mg(2+) binding site. A Mg(2+)-binding site is contributed by Thr390. Asp781 contacts Mg(2+). Residues Asn784 and Asp785 each contribute to the ATP site. Asp785 contacts Mg(2+). The chain crosses the membrane as a helical span at residues 838 to 858 (CILYCFYKNVVLYIIELWFAF). Residues 859-870 (VNGFSGQILFER) lie on the Exoplasmic loop side of the membrane. The helical transmembrane segment at 871–890 (WCIGLYNVIFTALPPFTLGI) threads the bilayer. Topologically, residues 891 to 920 (FERSCTQESMLRFPQLYRITQNAEGFNTKV) are cytoplasmic. Residues 921–942 (FWGHCINALVHSLILFWVPMKA) traverse the membrane as a helical segment. The Exoplasmic loop segment spans residues 943 to 956 (LEHDTPVTSGHATD). A helical membrane pass occupies residues 957–979 (YLFVGNIVYTYVVVTVCLKAGLE). The Cytoplasmic segment spans residues 980–985 (TTAWTK). Residues 986-1006 (FSHLAVWGSMLIWLVFFGVYS) form a helical membrane-spanning segment. The Exoplasmic loop segment spans residues 1007-1024 (TIWPTIPIAPDMKGQATM). Residues 1025 to 1049 (VLSSAYFWLGLFLVPTACLIEDVAW) traverse the membrane as a helical segment. Over 1050–1148 (RAAKHTCKKT…DTTKENSRKK (99 aa)) the chain is Cytoplasmic.

The protein belongs to the cation transport ATPase (P-type) (TC 3.A.3) family. Type IV subfamily. As to quaternary structure, component of a P4-ATPase flippase complex which consists of a catalytic alpha subunit and an accessory beta subunit. Interacts with TMEM30A to form a flippase complex. Mg(2+) serves as cofactor. As to expression, found in testis, heart and brain. Most abundant in testis. Also detected in fetal tissues. Expressed in retinal photoreceptor cells; detected in retina outer nuclear layer and inner segment (at protein level).

The protein localises to the membrane. The protein resides in the golgi apparatus membrane. Its subcellular location is the endosome membrane. It localises to the cell membrane. It is found in the photoreceptor outer segment membrane. The protein localises to the photoreceptor inner segment membrane. It carries out the reaction ATP + H2O + phospholipidSide 1 = ADP + phosphate + phospholipidSide 2.. The enzyme catalyses a 1,2-diacyl-sn-glycero-3-phospho-L-serine(out) + ATP + H2O = a 1,2-diacyl-sn-glycero-3-phospho-L-serine(in) + ADP + phosphate + H(+). The catalysed reaction is a 1,2-diacyl-sn-glycero-3-phosphoethanolamine(in) + ATP + H2O = a 1,2-diacyl-sn-glycero-3-phosphoethanolamine(out) + ADP + phosphate + H(+). Catalytic component of a P4-ATPase flippase complex which catalyzes the hydrolysis of ATP coupled to the transport of aminophospholipids from the outer to the inner leaflet of various membranes and ensures the maintenance of asymmetric distribution of phospholipids. Able to translocate phosphatidylserine, but not phosphatidylcholine. Phospholipid translocation also seems to be implicated in vesicle formation and in uptake of lipid signaling molecules. Reconstituted to liposomes, the ATP8A2:TMEM30A flippase complex predominantly transports phosphatidylserine (PS) and to a lesser extent phosphatidylethanolamine (PE). Phospholipid translocation is not associated with a countertransport of an inorganic ion or other charged substrate from the cytoplasmic side toward the exoplasm in connection with the phosphorylation from ATP. ATP8A2:TMEM30A may be involved in regulation of neurite outgrowth. Proposed to function in the generation and maintenance of phospholipid asymmetry in photoreceptor disk membranes and neuronal axon membranes. May be involved in vesicle trafficking in neuronal cells. Required for normal visual and auditory function; involved in photoreceptor and inner ear spiral ganglion cell survival. This chain is Phospholipid-transporting ATPase IB, found in Mus musculus (Mouse).